The following is a 193-amino-acid chain: MNNVIRPALVLFALLSALTGLAYPLAVTGAAKALFPSQAAGSLVVQGGTTVGSSLIGQNFGDPKHFWGRPSATAPQPYNASASGGSNLGPLNPALADAVKQRIEALRAADPGNAAAVPVDLVTASASGLDPDISPAAAHYQAARVARLRGLPPEQVNALVASHTQAPLWGWLGEPRVNVLALNLALDASAAAR.

A helical transmembrane segment spans residues 7-27; that stretch reads PALVLFALLSALTGLAYPLAV.

This sequence belongs to the KdpC family. The system is composed of three essential subunits: KdpA, KdpB and KdpC.

It is found in the cell inner membrane. Part of the high-affinity ATP-driven potassium transport (or Kdp) system, which catalyzes the hydrolysis of ATP coupled with the electrogenic transport of potassium into the cytoplasm. This subunit acts as a catalytic chaperone that increases the ATP-binding affinity of the ATP-hydrolyzing subunit KdpB by the formation of a transient KdpB/KdpC/ATP ternary complex. This Variovorax paradoxus (strain S110) protein is Potassium-transporting ATPase KdpC subunit.